Here is a 383-residue protein sequence, read N- to C-terminus: Phosphoenolpyruvate/phosphate translocator 2, chloroplastic (383 aa).

Residues 1-55 constitute a chloroplast transit peptide; it reads MFALTFLNPNPRLPSPLFLAKSTPESALSRRSRAFSSSNSYPWRPNLRFNGFKLK. The next 8 helical transmembrane spans lie at 76 to 96, 108 to 128, 143 to 163, 179 to 199, 210 to 232, 253 to 273, 299 to 319, and 350 to 369; these read GLKL…YNIF, ATVT…MWLL, VIVQ…VSLG, FFTV…WIVC, LASF…SNVT, INLF…LAIL, IMSL…YMIL, and VSPL…YLYS. An EamA domain is found at 93-212; that stretch reads YNIFNKQVLR…PIVAGVSLAS (120 aa).

Belongs to the TPT transporter family. PPT (TC 2.A.7.9) subfamily. As to expression, widely expressed in leaves throughout development. In flowers, expressed in sepals and pistils.

It localises to the plastid. Its subcellular location is the chloroplast membrane. In terms of biological role, phosphoenolpyruvate/phosphate translocator that transports phosphoenolpyruvate (PEP), 2-phosphoglycerate and 3-phosphoglycerate. This is Phosphoenolpyruvate/phosphate translocator 2, chloroplastic (PPT2) from Arabidopsis thaliana (Mouse-ear cress).